Consider the following 478-residue polypeptide: Cytochrome c-552 (478 aa).

A signal peptide spans 1 to 26 (MARKTLRARRFFSLIFPFFFITSVYA). Heme c is bound at residue His-94. Heme-binding residues include Cys-122, Cys-125, and Lys-126. Residues Cys-160, Cys-163, His-164, Cys-209, Cys-212, and His-213 each coordinate heme c. 4 residues coordinate Ca(2+): Glu-215, Tyr-216, Lys-261, and Gln-263. Residue Tyr-216 coordinates substrate. His-264 lines the substrate pocket. Heme c-binding residues include His-275, Cys-282, Cys-285, His-286, His-301, Cys-314, Cys-317, His-318, and His-393.

This sequence belongs to the cytochrome c-552 family. Requires Ca(2+) as cofactor. Heme c is required as a cofactor.

The protein localises to the periplasm. The catalysed reaction is 6 Fe(III)-[cytochrome c] + NH4(+) + 2 H2O = 6 Fe(II)-[cytochrome c] + nitrite + 8 H(+). It participates in nitrogen metabolism; nitrate reduction (assimilation). Catalyzes the reduction of nitrite to ammonia, consuming six electrons in the process. The protein is Cytochrome c-552 of Salmonella dublin (strain CT_02021853).